We begin with the raw amino-acid sequence, 123 residues long: Small ribosomal subunit protein uS12 (123 aa).

Asp89 is subject to 3-methylthioaspartic acid. The segment at 100 to 123 (GSLDTSGVKDRKQGRSKYGTKRPK) is disordered. Basic residues predominate over residues 113 to 123 (GRSKYGTKRPK).

The protein belongs to the universal ribosomal protein uS12 family. In terms of assembly, part of the 30S ribosomal subunit. Contacts proteins S8 and S17. May interact with IF1 in the 30S initiation complex.

Its function is as follows. With S4 and S5 plays an important role in translational accuracy. In terms of biological role, interacts with and stabilizes bases of the 16S rRNA that are involved in tRNA selection in the A site and with the mRNA backbone. Located at the interface of the 30S and 50S subunits, it traverses the body of the 30S subunit contacting proteins on the other side and probably holding the rRNA structure together. The combined cluster of proteins S8, S12 and S17 appears to hold together the shoulder and platform of the 30S subunit. The polypeptide is Small ribosomal subunit protein uS12 (Ectopseudomonas mendocina (strain ymp) (Pseudomonas mendocina)).